A 284-amino-acid chain; its full sequence is Co-chaperone protein DjlA (284 aa).

The Periplasmic segment spans residues 1–6 (MHIFGK). A helical membrane pass occupies residues 7–30 (ILGAFFGLLLGGPFGLLFGLFIGH). The Cytoplasmic portion of the chain corresponds to 31-284 (QFDKARRLSQ…DLIKKVKGFK (254 aa)). The 67-residue stretch at 218 to 284 (DAYKILDVSP…DLIKKVKGFK (67 aa)) folds into the J domain.

Homodimer.

It localises to the cell inner membrane. In terms of biological role, regulatory DnaK co-chaperone. Direct interaction between DnaK and DjlA is needed for the induction of the wcaABCDE operon, involved in the synthesis of a colanic acid polysaccharide capsule, possibly through activation of the RcsB/RcsC phosphotransfer signaling pathway. The colanic acid capsule may help the bacterium survive conditions outside the host. The polypeptide is Co-chaperone protein DjlA (Vibrio parahaemolyticus serotype O3:K6 (strain RIMD 2210633)).